The sequence spans 622 residues: Auxin efflux carrier component 1 (622 aa).

At 1–6 (MITAAD) the chain is on the extracellular side. A helical membrane pass occupies residues 7–27 (FYHVMTAMVPLYVAMILAYGS). Over 28–44 (VKWWKIFTPDQCSGINR) the chain is Cytoplasmic. Residues 45-65 (FVALFAVPLLSFHFIAANNPY) traverse the membrane as a helical segment. Position 51 (Val-51) interacts with (indol-3-yl)acetate. Topologically, residues 66–70 (AMNLR) are extracellular. A helical membrane pass occupies residues 71–91 (FLAADSLQKVIVLSLLFLWCK). The Cytoplasmic portion of the chain corresponds to 92–100 (LSRNGSLDW). The helical transmembrane segment at 101-121 (TITLFSLSTLPNTLVMGIPLL) threads the bilayer. The (indol-3-yl)acetate site is built by Asn-112 and Leu-114. The Extracellular portion of the chain corresponds to 122 to 131 (KGMYGNFSGD). An N-linked (GlcNAc...) asparagine glycan is attached at Asn-127. The helical transmembrane segment at 132 to 152 (LMVQIVVLQCIIWYTLMLFLF) threads the bilayer. Position 145 (Tyr-145) interacts with (indol-3-yl)acetate. Over 153–482 (EYRGAKLLIS…LIRNPNSYSS (330 aa)) the chain is Cytoplasmic. Ser-209, Ser-212, Ser-221, and Ser-225 each carry phosphoserine. Residues 213 to 233 (RSDIYSRRSQGLSATPRPSNL) form a disordered region. A Phosphothreonine modification is found at Thr-227. Ser-231 bears the Phosphoserine mark. Position 248 is a phosphothreonine (Thr-248). 3 positions are modified to phosphoserine: Ser-252, Ser-253, and Ser-271. The segment at 268-362 (GRNSNFGPGE…PVVGGKRQDG (95 aa)) is disordered. A Phosphothreonine modification is found at Thr-286. Residue Ser-290 is modified to Phosphoserine. The span at 298–311 (PAKPTAAGTAAGAG) shows a compositional bias: low complexity. A Phosphothreonine modification is found at Thr-302. 3 positions are modified to phosphoserine: Ser-317, Ser-320, and Ser-337. Phosphothreonine is present on Thr-340. A phosphoserine mark is found at Ser-374, Ser-377, Ser-408, Ser-414, Ser-426, Ser-434, and Ser-446. A helical membrane pass occupies residues 483-503 (LFGITWSLISFKWNIEMPALI). Topologically, residues 504–506 (AKS) are extracellular. The chain crosses the membrane as a helical span at residues 507 to 527 (ISILSDAGLGMAMFSLGLFMA). The Cytoplasmic segment spans residues 528–541 (LNPRIIACGNRRAA). The chain crosses the membrane as a helical span at residues 542–562 (FAAAMRFVVGPAVMLVASYAV). The Extracellular segment spans residues 563–566 (GLRG). Residues 567-587 (VLLHVAIIQAALPQGIVPFVF) form a helical membrane-spanning segment. The (indol-3-yl)acetate site is built by Ile-582 and Val-583. Over 588–601 (AKEYNVHPDILSTA) the chain is Cytoplasmic. Residues 602-622 (VIFGMLIALPITLLYYILLGL) traverse the membrane as a helical segment.

This sequence belongs to the auxin efflux carrier (TC 2.A.69.1) family. Homodimer. Interacts with TOPP4. Interacts with FYPP1 and FYPP3. Component of a complex made of PINs (e.g. PIN1 and PIN2), MAB4/MELs (e.g. NPY1/MAB4 and NPY5/MEL1) and AGC kinases (e.g. D6PK and PID) at the plasma membrane. Binds directly to NPY5/MEL1. As to expression, expressed at the basal side of elongated parenchymatous xylem cells.

The protein resides in the cell membrane. Auxin efflux carrier activity is competitively inhibited by naptalamate (N-1-naphthylphthalamic acid, NPA) but activated by D6PK-mediated phosphorylation. In terms of biological role, acts as a component of the auxin efflux carrier; this activity is enhanced when activated by D6PK-mediated phosphorylation. Binds auxins including indole-3-acetic acid (IAA), indole-3-butyric acid (IBA), indole-3-propionic acid (IPA) and 4-chloroindole-3-acetic acid (4-Cl-IAA). Seems to be involved in the basipetal auxin transport. Mediates the formation of auxin gradient which is required to ensure correct organogenesis. Coordinated polar localization of PIN1 is directly regulated by the vesicle trafficking process and apical-basal PIN1 polarity also depends on the phosphorylation of conserved serine residues by PID kinase. The ARF-GEF protein GNOM is required for the correct recycling of PIN1 between the plasma membrane and endosomal compartments. Recrutes NPY proteins (e.g. NPY1/MAB4 and NPY5/MEL1) to the plasma membrane in a polar basal localization in root epidermis; this activity is optimized by AGC kinases-mediated (e.g. D6PK and PID) phosphorylation that limits their lateral diffusion-based escape. The protein is Auxin efflux carrier component 1 of Arabidopsis thaliana (Mouse-ear cress).